A 509-amino-acid polypeptide reads, in one-letter code: Bestrophin-2a (509 aa).

Over 1-31 the chain is Cytoplasmic; it reads MTVTYTARVANARFGGFSQLLLLWRGSIYKL. Residue Ala10 coordinates Ca(2+). Residues 32-51 traverse the membrane as a helical segment; sequence LWRELLCFLGFYMALSAAYR. Over 52-60 the chain is Extracellular; that stretch reads FVLTEGQKR. The helical transmembrane segment at 61–82 threads the bilayer; that stretch reads YFEKLVIYCDQYASLIPVSFVL. The Cytoplasmic portion of the chain corresponds to 83 to 238; the sequence is GFYVTLVVNR…WISVPLVYTQ (156 aa). The helical transmembrane segment at 239 to 255 threads the bilayer; that stretch reads VVTIALYSYFLACLIGR. The Extracellular segment spans residues 256-274; it reads QFLDPAQGYKDHDLDLCVP. Residues 275-288 form a helical membrane-spanning segment; that stretch reads IFTLLQFFFYAGWL. Over 289–509 the chain is Cytoplasmic; sequence KVAEQLINPF…PIGEEEENLA (221 aa). Ca(2+) contacts are provided by Gln293, Asn296, Asp301, and Asp304. The disordered stretch occupies residues 454 to 509; sequence DPGLPEPEAPPPAGPEPLTLIPGPVEPFSIVTMPGPRGPAPPWLPSPIGEEEENLA. Composition is skewed to pro residues over residues 457 to 468 and 489 to 498; these read LPEPEAPPPAGP and PRGPAPPWLP.

Belongs to the anion channel-forming bestrophin (TC 1.A.46) family. Calcium-sensitive chloride channel subfamily. In terms of assembly, pentamer. Interacts with GLUL; this interaction tethers a fraction of GLUL to the membrane, causing a decrease of cytosolic glutamine synthase (GS) activity and inhibits the chloride channel activity of BEST2 by affecting the gating at the aperture in the absence of intracellular glutamate. As to expression, mainly confined to the retinal pigment epithelium. Expressed in colon.

The protein resides in the cell membrane. The protein localises to the basolateral cell membrane. It catalyses the reaction chloride(in) = chloride(out). The catalysed reaction is hydrogencarbonate(in) = hydrogencarbonate(out). It carries out the reaction L-glutamate(out) = L-glutamate(in). The enzyme catalyses iodide(out) = iodide(in). It catalyses the reaction L-glutamine(out) = L-glutamine(in). Its activity is regulated as follows. Chloride channel activity is allosterically inhibited by GLUL/glutamine synthase (GS) which affects the gating at the aperture in the absence of intracellular glutamate. Inhibitory effect of GLUL is relieved upon increasing of L-glutamate intracellular level. Ligand-gated anion channel that allows the movement of anions across cell membranes when activated by calcium (Ca2+). Transports a large specter of anions, namely mediates the movement of chloride, L-glutamate and iodide. Calcium-binding triggers the dilation of the aperture, but calcium-dependent gating is only effective when the size of the passing anion is bigger than the closed aperture. Mediates the calcium-activated hydrogencarbonate movement and participates in colonic hydrogencarbonate secretion concomitant with mucin secretion. In non-pigmented epithelium (NPE), mediates the efflux of intracellular L-glutamate; binding of intracellular L-glutamate activates and open both the neck and the aperture of the channel, leading to L-glutamate exit promoting chloride influx movement from the extracellular side in trans. Also exhibits a directional permeability for intracellular glutamine, in a similar manner as for L-glutamate. This chain is Bestrophin-2a, found in Homo sapiens (Human).